A 243-amino-acid polypeptide reads, in one-letter code: Coproheme decarboxylase (243 aa).

Residue Tyr145 is part of the active site. His168 serves as a coordination point for Fe-coproporphyrin III.

It belongs to the ChdC family. Type 2 subfamily. The cofactor is Fe-coproporphyrin III.

The catalysed reaction is Fe-coproporphyrin III + 2 H2O2 + 2 H(+) = heme b + 2 CO2 + 4 H2O. It carries out the reaction Fe-coproporphyrin III + H2O2 + H(+) = harderoheme III + CO2 + 2 H2O. It catalyses the reaction harderoheme III + H2O2 + H(+) = heme b + CO2 + 2 H2O. It functions in the pathway porphyrin-containing compound metabolism; protoheme biosynthesis. Involved in coproporphyrin-dependent heme b biosynthesis. Catalyzes the decarboxylation of Fe-coproporphyrin III (coproheme) to heme b (protoheme IX), the last step of the pathway. The reaction occurs in a stepwise manner with a three-propionate intermediate. This Streptomyces coelicolor (strain ATCC BAA-471 / A3(2) / M145) protein is Coproheme decarboxylase.